The sequence spans 160 residues: Protein-export protein SecB (160 aa).

This sequence belongs to the SecB family. As to quaternary structure, homotetramer, a dimer of dimers. One homotetramer interacts with 1 SecA dimer.

Its subcellular location is the cytoplasm. In terms of biological role, one of the proteins required for the normal export of preproteins out of the cell cytoplasm. It is a molecular chaperone that binds to a subset of precursor proteins, maintaining them in a translocation-competent state. It also specifically binds to its receptor SecA. This is Protein-export protein SecB from Agrobacterium fabrum (strain C58 / ATCC 33970) (Agrobacterium tumefaciens (strain C58)).